Reading from the N-terminus, the 73-residue chain is uncharacterized protein (73 aa).

Positions 8–63 constitute an HTH deoR-type domain; that stretch reads MLTRIKSVYMFIQEKGLVTTQELVDEFGITPRTIQRDLNVLAYNDLVHSPSRGKWE. A DNA-binding region (H-T-H motif) is located at residues 25–44; it reads VTTQELVDEFGITPRTIQRD.

This is an uncharacterized protein from Bacillus subtilis (strain 168).